A 104-amino-acid polypeptide reads, in one-letter code: Large ribosomal subunit protein uL24 (104 aa).

This sequence belongs to the universal ribosomal protein uL24 family. As to quaternary structure, part of the 50S ribosomal subunit.

Functionally, one of two assembly initiator proteins, it binds directly to the 5'-end of the 23S rRNA, where it nucleates assembly of the 50S subunit. Its function is as follows. One of the proteins that surrounds the polypeptide exit tunnel on the outside of the subunit. The sequence is that of Large ribosomal subunit protein uL24 from Corynebacterium jeikeium (strain K411).